Reading from the N-terminus, the 271-residue chain is Neurexophilin-1 (271 aa).

Positions 1-21 are cleaved as a signal peptide; that stretch reads MQAACWYVLLLLQPTVYLVTC. An II region spans residues 22–97; it reads ANLTNGGKSE…WDWLRNSTDL (76 aa). Residues N23, N68, N93, N146, N156, and N162 are each glycosylated (N-linked (GlcNAc...) asparagine). Residues 98–176 are III; that stretch reads QEPRPRAKRR…LVPPTKIVEF (79 aa). Positions 177–185 are IV (linker domain); sequence DLAQQTVID. The v (Cys-rich) stretch occupies residues 186 to 271; sequence AKDSKSFNCR…HSDTPYFPSG (86 aa).

This sequence belongs to the neurexophilin family. May be proteolytically processed at the boundary between the N-terminal non-conserved and the central conserved domain in neuron-like cells. Highest level in brain.

It is found in the secreted. Its function is as follows. May be signaling molecules that resemble neuropeptides. Ligand for alpha-neurexins. The protein is Neurexophilin-1 (Nxph1) of Rattus norvegicus (Rat).